The sequence spans 51 residues: Conotoxin Cal6.33 (51 aa).

A signal peptide spans Met-1–Ala-22. 3 disulfides stabilise this stretch: Cys-25–Cys-39, Cys-32–Cys-43, and Cys-38–Cys-50.

This sequence belongs to the conotoxin O1 superfamily. In terms of tissue distribution, expressed by the venom duct.

The protein localises to the secreted. In terms of biological role, probable neurotoxin. The chain is Conotoxin Cal6.33 from Californiconus californicus (California cone).